An 800-amino-acid polypeptide reads, in one-letter code: Phenylalanine--tRNA ligase beta subunit (800 aa).

A tRNA-binding domain is found at 39-154 (SKDIKNLVVG…TEVEPGTDAL (116 aa)). In terms of domain architecture, B5 spans 408 to 483 (SFVTPIDITA…RIYGYDEIPS (76 aa)). Positions 461, 467, 470, and 471 each coordinate Mg(2+). The 93-residue stretch at 708–800 (PKFPGVTRDI…ALQAQGATIR (93 aa)) folds into the FDX-ACB domain.

Belongs to the phenylalanyl-tRNA synthetase beta subunit family. Type 1 subfamily. As to quaternary structure, tetramer of two alpha and two beta subunits. Requires Mg(2+) as cofactor.

It localises to the cytoplasm. The enzyme catalyses tRNA(Phe) + L-phenylalanine + ATP = L-phenylalanyl-tRNA(Phe) + AMP + diphosphate + H(+). The chain is Phenylalanine--tRNA ligase beta subunit from Staphylococcus haemolyticus (strain JCSC1435).